A 749-amino-acid polypeptide reads, in one-letter code: Probable serine/threonine-protein kinase fhkD (749 aa).

In terms of domain architecture, FHA spans 47–150 (IFFGRNPKRC…NGTFVKGCIL (104 aa)). Low complexity predominate over residues 84 to 126 (NNNNNDGDNNNNNNNNNNNNNNNNNNNNNNNNNNNNNNNNNNN). Residues 84–130 (NNNNNDGDNNNNNNNNNNNNNNNNNNNNNNNNNNNNNNNNNNNTTKN) form a disordered region. The Protein kinase domain occupies 199–472 (YSIQGILGTG…TKGALSHDWF (274 aa)). Residues 205–213 (LGTGNFSVV) and K228 contribute to the ATP site. D323 functions as the Proton acceptor in the catalytic mechanism. Disordered regions lie at residues 512 to 620 (NIPM…PAII) and 640 to 749 (CTPT…LKGS). The span at 516–561 (TLNSTTTNTTSPNNNNNNNNNNNNKNNNKNIIKSLNSNSNNYNNNS) shows a compositional bias: low complexity. Residues 562 to 572 (VLKKTSQSPKT) show a composition bias toward polar residues. Composition is skewed to low complexity over residues 590–611 (NNNN…NNNN) and 651–667 (TNST…TSNS). The span at 668–687 (VTMGTSSTSIPVSNSITMKS) shows a compositional bias: polar residues. Basic and acidic residues predominate over residues 696–707 (DGDKKRKEKESS). Low complexity predominate over residues 708–739 (SSENVNDVIVINSNNHNNNNNNNHNINNGISS).

This sequence belongs to the protein kinase superfamily. CAMK Ser/Thr protein kinase family. CHK2 subfamily.

It catalyses the reaction L-seryl-[protein] + ATP = O-phospho-L-seryl-[protein] + ADP + H(+). The catalysed reaction is L-threonyl-[protein] + ATP = O-phospho-L-threonyl-[protein] + ADP + H(+). The chain is Probable serine/threonine-protein kinase fhkD (fhkD) from Dictyostelium discoideum (Social amoeba).